Here is a 306-residue protein sequence, read N- to C-terminus: Putative S-adenosyl-L-methionine-dependent methyltransferase Mvan_1345 (306 aa).

S-adenosyl-L-methionine is bound by residues D134 and 163–164 (DL).

It belongs to the UPF0677 family.

In terms of biological role, exhibits S-adenosyl-L-methionine-dependent methyltransferase activity. In Mycolicibacterium vanbaalenii (strain DSM 7251 / JCM 13017 / BCRC 16820 / KCTC 9966 / NRRL B-24157 / PYR-1) (Mycobacterium vanbaalenii), this protein is Putative S-adenosyl-L-methionine-dependent methyltransferase Mvan_1345.